The following is a 445-amino-acid chain: Histone acetyltransferase of the MYST family 2 (445 aa).

A compositionally biased stretch (polar residues) spans 1 to 23 (MGSSANTETNGNAPPPSSNQKPP). Residues 1–58 (MGSSANTETNGNAPPPSSNQKPPATNGVDGSHPPPPPLTPDQAIIESDPSKKRKMGML) are disordered. The Tudor-knot domain maps to 60 to 118 (LEVGTRVMCRWRDGKHHPVKVIERRRIHNGGQNDYEYYVHYTEFNRRLDEWTQLDQLDL). Residues 169-440 (TKVKNISTIE…VDASKLIWTP (272 aa)) form the MYST-type HAT domain. The segment at 202–227 (LFFCEFCLNFMKRKEQLQRHMRKCDL) adopts a C2HC MYST-type zinc-finger fold. Lys269 carries the post-translational modification N6-acetyllysine; by autocatalysis. Acetyl-CoA is bound by residues 312–314 (ILT) and 319–325 (QRKGYGK). The active-site Proton donor/acceptor is the Glu345. An acetyl-CoA-binding site is contributed by Ser349.

Belongs to the MYST (SAS/MOZ) family. Interacts with MRG1 and MRG2. Autoacetylation at Lys-269 is required for proper function. In terms of tissue distribution, expressed in cotyledons, leaves, stems, roots and, at higher levels in developing flowers, particularly in the anthers and gynoecia. Constitutively expressed in all tissues, predominantly in shoot apical meristem.

The protein localises to the nucleus. It catalyses the reaction L-lysyl-[protein] + acetyl-CoA = N(6)-acetyl-L-lysyl-[protein] + CoA + H(+). Histone acetyltransferase which may be involved in transcriptional activation. Acetylates 'Lys-5' of histone H4 (H4K5ac). Essential for gametophyte development. Negative regulator of flowering controlling the H4K5ac levels in the FLC chromatin. The sequence is that of Histone acetyltransferase of the MYST family 2 from Arabidopsis thaliana (Mouse-ear cress).